A 446-amino-acid polypeptide reads, in one-letter code: MRKYFGTDGIRGRANGVITPELALKVGQAAGLLFQRGEYRHRVVIGKDTRLSGYMIETALVAGFTSVGMDVLLLGPMPTPAVAMLTRSMRADLGVMISASHNPYEDNGIKLFGPDGFKLSDEVEHEIERLIDSDLQKRLSASADLGRAKRIESVHARYIEFAKRTLPRNITLDGLRVVVDCANGAAYRVAPETLWELGAEVIAIGTEPDGFNINRDVGSTAPDALVRKVRELRADIGIALDGDADRVLVVDEKGQRVDGDQLMAVVARSWKEDERLTQPGIVATIMSNLGLERYLGGLGLSLVRTAVGDRYVLEHMREHGYNLGGEQSGHIIMSDYATTGDGLVAALQLLTVVQRQKRPVSEVCHCFDPLPQVLKNVRYGAGEPLRKDSVVTAIEGARQRLGNAGRLVIRPSGTEPVIRVMAEGDDRDLVVEVVDEVVEALRKAAA.

Catalysis depends on Ser100, which acts as the Phosphoserine intermediate. 4 residues coordinate Mg(2+): Ser100, Asp241, Asp243, and Asp245. At Ser100 the chain carries Phosphoserine.

It belongs to the phosphohexose mutase family. It depends on Mg(2+) as a cofactor. Post-translationally, activated by phosphorylation.

The catalysed reaction is alpha-D-glucosamine 1-phosphate = D-glucosamine 6-phosphate. Its function is as follows. Catalyzes the conversion of glucosamine-6-phosphate to glucosamine-1-phosphate. The polypeptide is Phosphoglucosamine mutase (Methylobacterium nodulans (strain LMG 21967 / CNCM I-2342 / ORS 2060)).